A 376-amino-acid chain; its full sequence is Actin-related protein T1 (376 aa).

Belongs to the actin family. As to expression, in skin, expressed in the basal, spinous and granular layers of the epidermis. Also expressed in hair follicles, sebaceaous glands, eccrine sweat glands and semen.

Its subcellular location is the cytoplasm. The protein resides in the cytoskeleton. The protein localises to the nucleus. It localises to the cytoplasmic vesicle. It is found in the secretory vesicle. Its subcellular location is the acrosome. Functionally, negatively regulates the Hedgehog (SHH) signaling. Binds to the promoter of the SHH signaling mediator, GLI1, and inhibits its expression. In Homo sapiens (Human), this protein is Actin-related protein T1.